The primary structure comprises 203 residues: ATP-dependent Clp protease proteolytic subunit (203 aa).

Ser100 (nucleophile) is an active-site residue. Residue His125 is part of the active site.

Belongs to the peptidase S14 family. In terms of assembly, fourteen ClpP subunits assemble into 2 heptameric rings which stack back to back to give a disk-like structure with a central cavity, resembling the structure of eukaryotic proteasomes.

The protein localises to the cytoplasm. It carries out the reaction Hydrolysis of proteins to small peptides in the presence of ATP and magnesium. alpha-casein is the usual test substrate. In the absence of ATP, only oligopeptides shorter than five residues are hydrolyzed (such as succinyl-Leu-Tyr-|-NHMec, and Leu-Tyr-Leu-|-Tyr-Trp, in which cleavage of the -Tyr-|-Leu- and -Tyr-|-Trp bonds also occurs).. Functionally, cleaves peptides in various proteins in a process that requires ATP hydrolysis. Has a chymotrypsin-like activity. Plays a major role in the degradation of misfolded proteins. The sequence is that of ATP-dependent Clp protease proteolytic subunit from Anaeromyxobacter sp. (strain K).